A 207-amino-acid chain; its full sequence is GTP cyclohydrolase 1 (207 aa).

Positions 94, 97, and 167 each coordinate Zn(2+).

The protein belongs to the GTP cyclohydrolase I family. In terms of assembly, toroid-shaped homodecamer, composed of two pentamers of five dimers.

The catalysed reaction is GTP + H2O = 7,8-dihydroneopterin 3'-triphosphate + formate + H(+). It functions in the pathway cofactor biosynthesis; 7,8-dihydroneopterin triphosphate biosynthesis; 7,8-dihydroneopterin triphosphate from GTP: step 1/1. This chain is GTP cyclohydrolase 1, found in Thermobifida fusca (strain YX).